We begin with the raw amino-acid sequence, 100 residues long: Urease subunit gamma (100 aa).

Belongs to the urease gamma subunit family. In terms of assembly, heterotrimer of UreA (gamma), UreB (beta) and UreC (alpha) subunits. Three heterotrimers associate to form the active enzyme.

It is found in the cytoplasm. The enzyme catalyses urea + 2 H2O + H(+) = hydrogencarbonate + 2 NH4(+). Its pathway is nitrogen metabolism; urea degradation; CO(2) and NH(3) from urea (urease route): step 1/1. This is Urease subunit gamma from Pseudomonas syringae pv. tomato (strain ATCC BAA-871 / DC3000).